The following is a 98-amino-acid chain: Cuticle protein 67, isoform A (98 aa).

A run of 6 repeats spans residues 7–10, 15–18, 22–25, 79–82, 86–89, and 92–95.

Its function is as follows. Component of the cuticle of migratory locust which contains more than 100 different structural proteins. The chain is Cuticle protein 67, isoform A from Locusta migratoria (Migratory locust).